Here is a 650-residue protein sequence, read N- to C-terminus: Probable potassium transport system protein Kup 1 (650 aa).

Helical transmembrane passes span 12–32 (GLLI…LYVM), 54–74 (ISLV…IIAL), 97–117 (WLVL…TLTP), 139–159 (VSSQ…LFSI), 170–190 (AFGP…LINM), 216–236 (AGIF…ALYS), 249–269 (SWPF…VWIL), 295–315 (LAAI…LITG), 344–364 (IYIP…VLYF), 375–395 (GLSI…WLAM), 400–420 (PVWN…FMIS), and 428–448 (GGYV…VWYY).

It belongs to the HAK/KUP transporter (TC 2.A.72) family.

The protein localises to the cell membrane. It catalyses the reaction K(+)(in) + H(+)(in) = K(+)(out) + H(+)(out). Functionally, transport of potassium into the cell. Likely operates as a K(+):H(+) symporter. The polypeptide is Probable potassium transport system protein Kup 1 (Lactobacillus acidophilus (strain ATCC 700396 / NCK56 / N2 / NCFM)).